The following is a 566-amino-acid chain: Urease subunit beta (566 aa).

Residues glycine 129–phenylalanine 566 form the Urease domain. Positions 134, 136, and 217 each coordinate Ni(2+). Lysine 217 is subject to N6-carboxylysine. Histidine 219 lines the substrate pocket. Ni(2+)-binding residues include histidine 246 and histidine 272. Catalysis depends on histidine 320, which acts as the Proton donor. Aspartate 360 is a binding site for Ni(2+).

It belongs to the metallo-dependent hydrolases superfamily. Urease alpha subunit family. As to quaternary structure, heterohexamer of 3 UreA (alpha) and 3 UreB (beta) subunits. Ni cation is required as a cofactor. Carboxylation allows a single lysine to coordinate two nickel ions.

It localises to the cytoplasm. The catalysed reaction is urea + 2 H2O + H(+) = hydrogencarbonate + 2 NH4(+). The protein operates within nitrogen metabolism; urea degradation; CO(2) and NH(3) from urea (urease route): step 1/1. This is Urease subunit beta from Aliarcobacter butzleri (strain RM4018) (Arcobacter butzleri).